We begin with the raw amino-acid sequence, 341 residues long: HTH-type transcriptional repressor PurR (341 aa).

One can recognise an HTH lacI-type domain in the interval 2–56; that stretch reads ATIKDVAKRAGVSTTTVSHVINKTRFVAEETKAAVGAAIKELHYSPSAVARSLKV. Residues 4–23 constitute a DNA-binding region (H-T-H motif); that stretch reads IKDVAKRAGVSTTTVSHVIN. The DNA-binding element occupies 48–56; sequence SAVARSLKV. 5 residues coordinate hypoxanthine: Tyr-73, Arg-190, Thr-192, Phe-221, and Asp-275.

Homodimer.

It functions in the pathway purine metabolism; purine nucleotide biosynthesis [regulation]. In terms of biological role, is the main repressor of the genes involved in the de novo synthesis of purine nucleotides, regulating purB, purC, purEK, purF, purHD, purL, purMN and guaBA expression. PurR is allosterically activated to bind its cognate DNA by binding the purine corepressors, hypoxanthine or guanine, thereby effecting transcription repression. In Serratia proteamaculans (strain 568), this protein is HTH-type transcriptional repressor PurR.